The primary structure comprises 229 residues: uncharacterized protein (229 aa).

This is an uncharacterized protein from Mus musculus (Mouse).